Reading from the N-terminus, the 69-residue chain is DNA-directed RNA polymerase subunit epsilon (69 aa).

The protein belongs to the RNA polymerase subunit epsilon family. RNAP is composed of a core of 2 alpha, a beta and a beta' subunit. The core is associated with a delta subunit, and at least one of epsilon or omega. When a sigma factor is associated with the core the holoenzyme is formed, which can initiate transcription.

It catalyses the reaction RNA(n) + a ribonucleoside 5'-triphosphate = RNA(n+1) + diphosphate. Functionally, a non-essential component of RNA polymerase (RNAP). This Listeria welshimeri serovar 6b (strain ATCC 35897 / DSM 20650 / CCUG 15529 / CIP 8149 / NCTC 11857 / SLCC 5334 / V8) protein is DNA-directed RNA polymerase subunit epsilon.